The primary structure comprises 468 residues: Ubiquitin carboxyl-terminal hydrolase 17-like protein B (468 aa).

The segment at Met1–Pro20 is disordered. The 298-residue stretch at Cys51 to Gln348 folds into the USP domain. Cys60 acts as the Nucleophile in catalysis. His307 functions as the Proton acceptor in the catalytic mechanism. Residues Lys374 to Gly449 are disordered. Residues Cys394–Lys403 are compositionally biased toward basic and acidic residues. Positions Gly422 to Glu434 are enriched in polar residues.

This sequence belongs to the peptidase C19 family. USP17 subfamily. In terms of processing, ubiquitinated. As to expression, detected in brain, heart, liver, lung, kidney, ovary and spleen.

The enzyme catalyses Thiol-dependent hydrolysis of ester, thioester, amide, peptide and isopeptide bonds formed by the C-terminal Gly of ubiquitin (a 76-residue protein attached to proteins as an intracellular targeting signal).. With respect to regulation, inhibited by ubiquitin aldehyde. Its function is as follows. Deubiquitinating enzyme that removes conjugated ubiquitin from specific proteins to regulate different cellular processes. This Mus musculus (Mouse) protein is Ubiquitin carboxyl-terminal hydrolase 17-like protein B.